The chain runs to 319 residues: tRNA U34 carboxymethyltransferase (319 aa).

Residues K88, W102, K107, G126, 176 to 177 (LE), M192, Y196, and R311 contribute to the carboxy-S-adenosyl-L-methionine site.

The protein belongs to the class I-like SAM-binding methyltransferase superfamily. CmoB family. As to quaternary structure, homotetramer.

The enzyme catalyses carboxy-S-adenosyl-L-methionine + 5-hydroxyuridine(34) in tRNA = 5-carboxymethoxyuridine(34) in tRNA + S-adenosyl-L-homocysteine + H(+). In terms of biological role, catalyzes carboxymethyl transfer from carboxy-S-adenosyl-L-methionine (Cx-SAM) to 5-hydroxyuridine (ho5U) to form 5-carboxymethoxyuridine (cmo5U) at position 34 in tRNAs. The chain is tRNA U34 carboxymethyltransferase from Pseudomonas syringae pv. syringae (strain B728a).